The following is a 91-amino-acid chain: Preprofallaxidin-2 (91 aa).

The N-terminal stretch at 1-22 (MASLKKSLFLVLFLGLVSLSIC) is a signal peptide. The propeptide occupies 23–49 (EKEKRENEGNENEEEEENHEEGSEEKR). A disordered region spans residues 24-49 (KEKRENEGNENEEEEENHEEGSEEKR). A compositionally biased stretch (acidic residues) spans 31–41 (GNENEEEEENH). L65 carries the post-translational modification Leucine amide. The propeptide occupies 69–73 (SEEKR). A Leucine amide modification is found at L89.

Belongs to the frog skin active peptide (FSAP) family. Dermaseptin subfamily. As to expression, expressed by the skin glands.

Its subcellular location is the secreted. In terms of biological role, fallaxidin-3.1 shows antibacterial activity against the Gram-positive bacteria E.faecalis (MIC=100 uM) and L.lactis (MIC=100 uM). No antibacterial activity against the Gram-positive bacteria B.cereus, L.innocua, M.luteus, S.epidermidis, S.uberis and S.aureus, or the Gram-negative bacteria E.cloacae and E.coli. Fallaxidin-3.2 shows antibacterial activity against the Gram-positive bacteria E.faecalis (MIC=100 uM) and L.lactis (MIC=500 uM). No antibacterial activity against the Gram-positive bacteria B.cereus, L.innocua, M.luteus, S.epidermidis, S.uberis and S.aureus, or the Gram-negative bacteria E.cloacae and E.coli. The protein is Preprofallaxidin-2 of Litoria fallax (Eastern dwarf tree frog).